The sequence spans 980 residues: Alanine--tRNA ligase, mitochondrial (980 aa).

The N-terminal 23 residues, 1-23 (MAVALAAAAGKLRRAIGRSCPWQ), are a transit peptide targeting the mitochondrion. ATP-binding positions include Arg105, His123, Trp205, and 235–237 (LWN). Residues Asn237 and Asp260 each contribute to the L-alanine site. Gly264 is an ATP binding site. Zn(2+)-binding residues include His627, His631, Cys744, and His748.

It belongs to the class-II aminoacyl-tRNA synthetase family. In terms of assembly, monomer. Zn(2+) is required as a cofactor.

It localises to the mitochondrion. The catalysed reaction is tRNA(Ala) + L-alanine + ATP = L-alanyl-tRNA(Ala) + AMP + diphosphate. It catalyses the reaction (S)-lactate + ATP + H(+) = (S)-lactoyl-AMP + diphosphate. It carries out the reaction (S)-lactoyl-AMP + L-lysyl-[protein] = N(6)-[(S)-lactoyl]-L-lysyl-[protein] + AMP + 2 H(+). Functionally, catalyzes the attachment of alanine to tRNA(Ala) in a two-step reaction: alanine is first activated by ATP to form Ala-AMP and then transferred to the acceptor end of tRNA(Ala). Also edits incorrectly charged tRNA(Ala) via its editing domain. In presence of high levels of lactate, also acts as a protein lactyltransferase that mediates lactylation of lysine residues in target proteins, such as CGAS. Acts as an inhibitor of cGAS/STING signaling by catalyzing lactylation of CGAS, preventing the formation of liquid-like droplets in which CGAS is activated. The polypeptide is Alanine--tRNA ligase, mitochondrial (Aars2) (Mus musculus (Mouse)).